We begin with the raw amino-acid sequence, 286 residues long: 4-hydroxy-3-methylbut-2-enyl diphosphate reductase (286 aa).

Residue Cys-12 participates in [4Fe-4S] cluster binding. (2E)-4-hydroxy-3-methylbut-2-enyl diphosphate is bound by residues His-47 and His-80. His-47 and His-80 together coordinate dimethylallyl diphosphate. Isopentenyl diphosphate contacts are provided by His-47 and His-80. Cys-102 provides a ligand contact to [4Fe-4S] cluster. Residue His-130 coordinates (2E)-4-hydroxy-3-methylbut-2-enyl diphosphate. Position 130 (His-130) interacts with dimethylallyl diphosphate. His-130 is a binding site for isopentenyl diphosphate. The Proton donor role is filled by Glu-132. Thr-170 provides a ligand contact to (2E)-4-hydroxy-3-methylbut-2-enyl diphosphate. A [4Fe-4S] cluster-binding site is contributed by Cys-198. 3 residues coordinate (2E)-4-hydroxy-3-methylbut-2-enyl diphosphate: Ser-226, Asn-228, and Ser-270. Dimethylallyl diphosphate is bound by residues Ser-226, Asn-228, and Ser-270. Isopentenyl diphosphate contacts are provided by Ser-226, Asn-228, and Ser-270.

This sequence belongs to the IspH family. [4Fe-4S] cluster serves as cofactor.

The enzyme catalyses isopentenyl diphosphate + 2 oxidized [2Fe-2S]-[ferredoxin] + H2O = (2E)-4-hydroxy-3-methylbut-2-enyl diphosphate + 2 reduced [2Fe-2S]-[ferredoxin] + 2 H(+). It catalyses the reaction dimethylallyl diphosphate + 2 oxidized [2Fe-2S]-[ferredoxin] + H2O = (2E)-4-hydroxy-3-methylbut-2-enyl diphosphate + 2 reduced [2Fe-2S]-[ferredoxin] + 2 H(+). Its pathway is isoprenoid biosynthesis; dimethylallyl diphosphate biosynthesis; dimethylallyl diphosphate from (2E)-4-hydroxy-3-methylbutenyl diphosphate: step 1/1. It participates in isoprenoid biosynthesis; isopentenyl diphosphate biosynthesis via DXP pathway; isopentenyl diphosphate from 1-deoxy-D-xylulose 5-phosphate: step 6/6. In terms of biological role, catalyzes the conversion of 1-hydroxy-2-methyl-2-(E)-butenyl 4-diphosphate (HMBPP) into a mixture of isopentenyl diphosphate (IPP) and dimethylallyl diphosphate (DMAPP). Acts in the terminal step of the DOXP/MEP pathway for isoprenoid precursor biosynthesis. The polypeptide is 4-hydroxy-3-methylbut-2-enyl diphosphate reductase (Desulfovibrio desulfuricans (strain ATCC 27774 / DSM 6949 / MB)).